The following is a 170-amino-acid chain: Arginine repressor (170 aa).

This sequence belongs to the ArgR family.

It localises to the cytoplasm. The protein operates within amino-acid biosynthesis; L-arginine biosynthesis [regulation]. Functionally, regulates arginine biosynthesis genes. The protein is Arginine repressor of Mycobacterium tuberculosis (strain ATCC 25177 / H37Ra).